Consider the following 163-residue polypeptide: E3 ubiquitin-protein ligase ATL23 (163 aa).

The chain crosses the membrane as a helical span at residues 35 to 55; that stretch reads ALLLPCVGMCIVFLIYLFLLW. The RING-type; atypical zinc finger occupies 104 to 146; it reads CAVCLEDIESGQSTRLVPGCNHGFHQLCADTWLSNHTVCPVCR.

It belongs to the RING-type zinc finger family. ATL subfamily.

The protein localises to the membrane. It carries out the reaction S-ubiquitinyl-[E2 ubiquitin-conjugating enzyme]-L-cysteine + [acceptor protein]-L-lysine = [E2 ubiquitin-conjugating enzyme]-L-cysteine + N(6)-ubiquitinyl-[acceptor protein]-L-lysine.. Its pathway is protein modification; protein ubiquitination. Functionally, E3 ubiquitin-protein ligase able to catalyze polyubiquitination with ubiquitin-conjugating enzyme E2 UBC8, UBC10, UBC11, UBC28 and UBC29 in vitro. This Arabidopsis thaliana (Mouse-ear cress) protein is E3 ubiquitin-protein ligase ATL23 (ATL23).